The chain runs to 491 residues: MANYFNTLNLRQQLAQLGKCRFMGRDEFADGASYLQGKKVVIVGCGAQGLNQGLNMRDSGLDISYALRKEAIAEKRASWRKATENGFKVGTYEELIPQADLVVNLTPDKQHSDVVRSVQPLMKDGAALGYSHGFNIVEVGEQIRKDITVVMVAPKCPGTEVREEYKRGFGVPTLIAVHPENDPKGEGMAIAKAWAAATGGHRAGVLESSFVAEVKSDLMGEQTILCGMLQAGSLLCFDKLVAEGTDPAYAEKLIQFGWETITEALKQGGITLMMDRLSNPAKLRAYALSEQLKEIMAPLFQKHMDDIISGEFSSGMMADWANDDKKLLTWREETGKTAFETAPQFEGKIGEQEYFDKGVLMIAMVKAGVELAFETMVDSGIIEESAYYESLHELPLIANTIARKRLYEMNVVISDTAEYGNYLFSYACVPLLKPFIAELQPGDLGSAIPEGAVDNAQLRDVNDAIRSHAIEQVGKKLRGYMTDMKRIAVAG.

One can recognise a KARI N-terminal Rossmann domain in the interval 15 to 208; the sequence is AQLGKCRFMG…GGHRAGVLES (194 aa). Residues 45–48, Arg68, Arg76, Ser78, and 108–110 each bind NADP(+); these read CGAQ and DKQ. His132 is a catalytic residue. Gly158 contributes to the NADP(+) binding site. KARI C-terminal knotted domains follow at residues 209–344 and 345–484; these read SFVA…TAPQ and FEGK…MTDM. Positions 217, 221, 389, and 393 each coordinate Mg(2+). Ser414 is a binding site for substrate.

Belongs to the ketol-acid reductoisomerase family. The cofactor is Mg(2+).

It catalyses the reaction (2R)-2,3-dihydroxy-3-methylbutanoate + NADP(+) = (2S)-2-acetolactate + NADPH + H(+). The enzyme catalyses (2R,3R)-2,3-dihydroxy-3-methylpentanoate + NADP(+) = (S)-2-ethyl-2-hydroxy-3-oxobutanoate + NADPH + H(+). The protein operates within amino-acid biosynthesis; L-isoleucine biosynthesis; L-isoleucine from 2-oxobutanoate: step 2/4. It participates in amino-acid biosynthesis; L-valine biosynthesis; L-valine from pyruvate: step 2/4. Involved in the biosynthesis of branched-chain amino acids (BCAA). Catalyzes an alkyl-migration followed by a ketol-acid reduction of (S)-2-acetolactate (S2AL) to yield (R)-2,3-dihydroxy-isovalerate. In the isomerase reaction, S2AL is rearranged via a Mg-dependent methyl migration to produce 3-hydroxy-3-methyl-2-ketobutyrate (HMKB). In the reductase reaction, this 2-ketoacid undergoes a metal-dependent reduction by NADPH to yield (R)-2,3-dihydroxy-isovalerate. This is Ketol-acid reductoisomerase (NADP(+)) from Salmonella agona (strain SL483).